Consider the following 495-residue polypeptide: Glutamyl-tRNA(Gln) amidotransferase subunit A (495 aa).

Catalysis depends on charge relay system residues Lys-78 and Ser-159. Catalysis depends on Ser-183, which acts as the Acyl-ester intermediate.

Belongs to the amidase family. GatA subfamily. As to quaternary structure, heterotrimer of A, B and C subunits.

The enzyme catalyses L-glutamyl-tRNA(Gln) + L-glutamine + ATP + H2O = L-glutaminyl-tRNA(Gln) + L-glutamate + ADP + phosphate + H(+). Functionally, allows the formation of correctly charged Gln-tRNA(Gln) through the transamidation of misacylated Glu-tRNA(Gln) in organisms which lack glutaminyl-tRNA synthetase. The reaction takes place in the presence of glutamine and ATP through an activated gamma-phospho-Glu-tRNA(Gln). The protein is Glutamyl-tRNA(Gln) amidotransferase subunit A of Rhizorhabdus wittichii (strain DSM 6014 / CCUG 31198 / JCM 15750 / NBRC 105917 / EY 4224 / RW1) (Sphingomonas wittichii).